The primary structure comprises 132 residues: Cytochrome b5 (132 aa).

Residues 2–78 form the Cytochrome b5 heme-binding domain; it reads GKIFTLAEVA…LDEYYVGDID (77 aa). The heme site is built by His-37 and His-61. Residues 104-124 traverse the membrane as a helical segment; the sequence is FVIKLLQFLVPLVILAGAIGI.

It belongs to the cytochrome b5 family.

It is found in the endoplasmic reticulum membrane. The protein resides in the microsome membrane. Membrane bound hemoprotein which function as an electron carrier for several membrane bound oxygenases. The polypeptide is Cytochrome b5 (Borago officinalis (Bourrache)).